The following is a 505-amino-acid chain: Putative thymidine phosphorylase (505 aa).

It belongs to the thymidine/pyrimidine-nucleoside phosphorylase family. Type 2 subfamily.

The enzyme catalyses thymidine + phosphate = 2-deoxy-alpha-D-ribose 1-phosphate + thymine. This Hahella chejuensis (strain KCTC 2396) protein is Putative thymidine phosphorylase.